Here is a 453-residue protein sequence, read N- to C-terminus: Cytochrome b-c1 complex subunit 2, mitochondrial (453 aa).

The transit peptide at 1-14 directs the protein to the mitochondrion; sequence MKLLSRAGSFSRFY. 3 positions are modified to N6-acetyllysine: lysine 66, lysine 199, and lysine 250. At serine 368 the chain carries Phosphoserine.

Belongs to the peptidase M16 family. UQCRC2/QCR2 subfamily. Component of the ubiquinol-cytochrome c oxidoreductase (cytochrome b-c1 complex, complex III, CIII), a multisubunit enzyme composed of 11 subunits. The complex is composed of 3 respiratory subunits cytochrome b, cytochrome c1 and Rieske protein UQCRFS1, 2 core protein subunits UQCRC1/QCR1 and UQCRC2/QCR2, and 6 low-molecular weight protein subunits UQCRH/QCR6, UQCRB/QCR7, UQCRQ/QCR8, UQCR10/QCR9, UQCR11/QCR10 and subunit 9, the cleavage product of Rieske protein UQCRFS1. The complex exists as an obligatory dimer and forms supercomplexes (SCs) in the inner mitochondrial membrane with NADH-ubiquinone oxidoreductase (complex I, CI) and cytochrome c oxidase (complex IV, CIV), resulting in different assemblies (supercomplex SCI(1)III(2)IV(1) and megacomplex MCI(2)III(2)IV(2)). Interacts with RAB5IF. Interacts with STMP1. In terms of processing, acetylation of Lys-159 and Lys-250 is observed in liver mitochondria from fasted mice but not from fed mice. As to expression, expressed in neurons and astrocytes of the cerebral cortex and hippocampus (at protein level).

The protein localises to the mitochondrion inner membrane. Functionally, component of the ubiquinol-cytochrome c oxidoreductase, a multisubunit transmembrane complex that is part of the mitochondrial electron transport chain which drives oxidative phosphorylation. The respiratory chain contains 3 multisubunit complexes succinate dehydrogenase (complex II, CII), ubiquinol-cytochrome c oxidoreductase (cytochrome b-c1 complex, complex III, CIII) and cytochrome c oxidase (complex IV, CIV), that cooperate to transfer electrons derived from NADH and succinate to molecular oxygen, creating an electrochemical gradient over the inner membrane that drives transmembrane transport and the ATP synthase. The cytochrome b-c1 complex catalyzes electron transfer from ubiquinol to cytochrome c, linking this redox reaction to translocation of protons across the mitochondrial inner membrane, with protons being carried across the membrane as hydrogens on the quinol. In the process called Q cycle, 2 protons are consumed from the matrix, 4 protons are released into the intermembrane space and 2 electrons are passed to cytochrome c. The 2 core subunits UQCRC1/QCR1 and UQCRC2/QCR2 are homologous to the 2 mitochondrial-processing peptidase (MPP) subunits beta-MPP and alpha-MPP respectively, and they seem to have preserved their MPP processing properties. May be involved in the in situ processing of UQCRFS1 into the mature Rieske protein and its mitochondrial targeting sequence (MTS)/subunit 9 when incorporated into complex III. This Mus musculus (Mouse) protein is Cytochrome b-c1 complex subunit 2, mitochondrial (Uqcrc2).